The following is a 670-amino-acid chain: Protein-glutamine gamma-glutamyltransferase 4 (670 aa).

Asparagine 151 and asparagine 219 each carry an N-linked (GlcNAc...) asparagine glycan. Cysteine 255 is an active-site residue. A glycan (N-linked (GlcNAc...) asparagine) is linked at asparagine 288. Residues histidine 314 and aspartate 337 contribute to the active site. Ca(2+) contacts are provided by asparagine 377, aspartate 379, glutamate 429, and glutamate 434. 2 N-linked (GlcNAc...) asparagine glycosylation sites follow: asparagine 456 and asparagine 491.

Belongs to the transglutaminase superfamily. Transglutaminase family. Homodimer. Ca(2+) is required as a cofactor. Expressed in the coagulating gland and in the dorsal part of the prostate. Not expressed in the brain, heart, kidney, liver, lung, muscle, pancreas, spleen, stomach, testis and thymus.

It localises to the secreted. It carries out the reaction L-glutaminyl-[protein] + L-lysyl-[protein] = [protein]-L-lysyl-N(6)-5-L-glutamyl-[protein] + NH4(+). Functionally, associated with the mammalian reproductive process. Plays an important role in the formation of the seminal coagulum through the cross-linking of specific proteins present in the seminal plasma. Transglutaminase is also required to stabilize the copulatory plug. This is Protein-glutamine gamma-glutamyltransferase 4 from Mus musculus (Mouse).